The sequence spans 405 residues: Fragilysin (405 aa).

The N-terminal stretch at M1–A25 is a signal peptide. H356 serves as a coordination point for Zn(2+). E357 is an active-site residue. The Zn(2+) site is built by H360 and H366.

This sequence belongs to the peptidase M10C family. Requires Zn(2+) as cofactor.

It is found in the secreted. The catalysed reaction is Broad proteolytic specificity, bonds hydrolyzed includes -Gly-|-Leu-, -Met-|-Leu-, -Phe-|-Leu-, -Cys-|-Leu-, -Leu-|-Gly-.. In terms of biological role, diarrheal toxin that hydrolyzes gelatin, azocoll, actin, tropomyosin, and fibrinogen. The protein is Fragilysin (btfP) of Bacteroides fragilis.